Consider the following 520-residue polypeptide: MGNVCVHMVNNCVDTKSNSWVRPTDLIMDHPLKPQLQDKPPQPMLMNKDDDKTKLNDTHGDPKLLEGKEKPAQKQTSQGQGGRKCSDEEYKKRAIACANSKRKAHNVRRLMSAGLQAESVLKTKTGHLKEYYNLGSKLGHGQFGTTFVCVEKGTGEEYACKSIPKRKLENEEDVEDVRREIEIMKHLLGQPNVISIKGAYEDSVAVHMVMELCRGGELFDRIVERGHYSERKAAHLAKVILGVVQTCHSLGVMHRDLKPENFLFVNDDEDSPLKAIDFGLSMFLKPGENFTDVVGSPYYIAPEVLNKNYGPEADIWSAGVMIYVLLSGSAPFWGETEEEIFNEVLEGELDLTSDPWPQVSESAKDLIRKMLERNPIQRLTAQQVLCHPWIRDEGNAPDTPLDTTVLSRLKKFSATDKLKKMALRVIAERLSEEEIHELRETFKTIDSGKSGRVTYKELKNGLERFNTNLDNSDINSLMQIPTDVHLEDTVDYNEFIEAIVRLRQIQEEEANDRLESSTKV.

Glycine 2 is lipidated: N-myristoyl glycine. Residues 31–87 (PLKPQLQDKPPQPMLMNKDDDKTKLNDTHGDPKLLEGKEKPAQKQTSQGQGGRKCSD) are disordered. Over residues 47 to 72 (NKDDDKTKLNDTHGDPKLLEGKEKPA) the composition is skewed to basic and acidic residues. Residues 132 to 390 (YNLGSKLGHG…AQQVLCHPWI (259 aa)) enclose the Protein kinase domain. Residues 138–146 (LGHGQFGTT) and lysine 161 contribute to the ATP site. Aspartate 256 functions as the Proton acceptor in the catalytic mechanism. Serine 296 is modified (phosphoserine). Residues 396–426 (APDTPLDTTVLSRLKKFSATDKLKKMALRVI) form an autoinhibitory domain region. The 36-residue stretch at 433-468 (EEIHELRETFKTIDSGKSGRVTYKELKNGLERFNTN) folds into the EF-hand 1 domain. The Ca(2+) site is built by aspartate 446, serine 450, arginine 452, glutamate 457, aspartate 483, glutamate 487, threonine 489, and glutamate 494. The EF-hand 2; degenerate domain occupies 469–505 (LDNSDINSLMQIPTDVHLEDTVDYNEFIEAIVRLRQI).

This sequence belongs to the protein kinase superfamily. Ser/Thr protein kinase family. CDPK subfamily.

Its subcellular location is the membrane. The enzyme catalyses L-seryl-[protein] + ATP = O-phospho-L-seryl-[protein] + ADP + H(+). The catalysed reaction is L-threonyl-[protein] + ATP = O-phospho-L-threonyl-[protein] + ADP + H(+). Activated by calcium. Autophosphorylation may play an important role in the regulation of the kinase activity. Functionally, may play a role in signal transduction pathways that involve calcium as a second messenger. The protein is Calcium-dependent protein kinase 25 (CPK25) of Arabidopsis thaliana (Mouse-ear cress).